The sequence spans 199 residues: Casparian strip membrane protein 2 (199 aa).

Over 1 to 37 the chain is Cytoplasmic; the sequence is MMRGSTEIDMPESSSVSKGTAPLIAAPMKEKGGYKKG. Residues 38 to 58 form a helical membrane-spanning segment; it reads IAIFDFILRLAAIATALAAAA. Residues 59 to 87 are Extracellular-facing; sequence SMGTSDETLPFFTQFFQFQASYDDLPTFQ. A helical transmembrane segment spans residues 88–108; it reads FFVIAMAIVAGYLVLSLPFSI. Topologically, residues 109 to 120 are cytoplasmic; it reads VAIVRPHAAGPR. The helical transmembrane segment at 121–141 threads the bilayer; it reads LLLIILDTVALTLNTAAGAAA. The Extracellular segment spans residues 142–173; the sequence is AAIVYLAHNGNSSTNWLAICQQFGDFCQKNSG. N-linked (GlcNAc...) asparagine glycosylation is present at Asn152. Residues 174–194 form a helical membrane-spanning segment; that stretch reads AVVASFITVVIFVFLLVLSAF. At 195-199 the chain is on the cytoplasmic side; that stretch reads ALRRH.

It belongs to the Casparian strip membrane proteins (CASP) family. Homodimer and heterodimers.

The protein localises to the cell membrane. In terms of biological role, regulates membrane-cell wall junctions and localized cell wall deposition. Required for establishment of the Casparian strip membrane domain (CSD) and the subsequent formation of Casparian strips, a cell wall modification of the root endodermis that determines an apoplastic barrier between the intraorganismal apoplasm and the extraorganismal apoplasm and prevents lateral diffusion. The sequence is that of Casparian strip membrane protein 2 from Populus trichocarpa (Western balsam poplar).